Consider the following 514-residue polypeptide: Folylpolyglutamate synthase (514 aa).

82 to 85 (GKGS) serves as a coordination point for ATP. Ser-107, Glu-186, and His-214 together coordinate Mg(2+). The ATP site is built by Arg-339 and Asp-355.

The protein belongs to the folylpolyglutamate synthase family. Requires a monovalent cation as cofactor.

The protein resides in the mitochondrion inner membrane. It is found in the mitochondrion matrix. The protein localises to the cytoplasm. It carries out the reaction (6S)-5,6,7,8-tetrahydrofolyl-(gamma-L-Glu)(n) + L-glutamate + ATP = (6S)-5,6,7,8-tetrahydrofolyl-(gamma-L-Glu)(n+1) + ADP + phosphate + H(+). It functions in the pathway cofactor biosynthesis; tetrahydrofolylpolyglutamate biosynthesis. Functionally, catalyzes conversion of folates to polyglutamate derivatives allowing concentration of folate compounds in the cell and the intracellular retention of these cofactors, which are important substrates for most of the folate-dependent enzymes that are involved in one-carbon transfer reactions involved in purine, pyrimidine and amino acid synthesis. This chain is Folylpolyglutamate synthase (MET7), found in Candida albicans (Yeast).